The chain runs to 201 residues: Proteasome subunit beta type-2 (201 aa).

M1 bears the N-acetylmethionine mark.

This sequence belongs to the peptidase T1B family. The 26S proteasome consists of a 20S proteasome core and two 19S regulatory subunits. The 20S proteasome core is a barrel-shaped complex made of 28 subunits that are arranged in four stacked rings. The two outer rings are each formed by seven alpha subunits, and the two inner rings are formed by seven beta subunits. The proteolytic activity is exerted by three beta-subunits PSMB5, PSMB6 and PSMB7. As to quaternary structure, (Microbial infection) Interacts with HIV-1 protein Tat.

It localises to the cytoplasm. It is found in the nucleus. Functionally, non-catalytic component of the 20S core proteasome complex involved in the proteolytic degradation of most intracellular proteins. This complex plays numerous essential roles within the cell by associating with different regulatory particles. Associated with two 19S regulatory particles, forms the 26S proteasome and thus participates in the ATP-dependent degradation of ubiquitinated proteins. The 26S proteasome plays a key role in the maintenance of protein homeostasis by removing misfolded or damaged proteins that could impair cellular functions, and by removing proteins whose functions are no longer required. Associated with the PA200 or PA28, the 20S proteasome mediates ubiquitin-independent protein degradation. This type of proteolysis is required in several pathways including spermatogenesis (20S-PA200 complex) or generation of a subset of MHC class I-presented antigenic peptides (20S-PA28 complex). The polypeptide is Proteasome subunit beta type-2 (Homo sapiens (Human)).